Here is a 226-residue protein sequence, read N- to C-terminus: Spermatogenesis-associated protein 25 (226 aa).

A helical membrane pass occupies residues 153-173; sequence ICILTLAMMIAGIPTVPVPGL.

It belongs to the SPATA25 family. Expressed strongly in testis, weakly in epididymis and not detected in other tissues.

It localises to the membrane. Functionally, may play a role in spermatogenesis. This chain is Spermatogenesis-associated protein 25 (Spata25), found in Mus musculus (Mouse).